We begin with the raw amino-acid sequence, 36 residues long: Photosystem I reaction center subunit VIII (36 aa).

The helical transmembrane segment at 5 to 27 threads the bilayer; that stretch reads FLPSILVPLVGLVFPAIAIASLF.

This sequence belongs to the PsaI family.

Its subcellular location is the plastid. The protein localises to the chloroplast thylakoid membrane. May help in the organization of the PsaL subunit. This is Photosystem I reaction center subunit VIII from Chaetosphaeridium globosum (Charophycean green alga).